A 158-amino-acid chain; its full sequence is Na(+)/H(+) antiporter subunit E (158 aa).

Helical transmembrane passes span tyrosine 22–leucine 41 and isoleucine 54–isoleucine 76.

This sequence belongs to the CPA3 antiporters (TC 2.A.63) subunit E family. In terms of assembly, forms a heterooligomeric complex that consists of seven subunits: MrpA, MrpB, MrpC, MrpD, MrpE, MrpF and MrpG.

It localises to the cell membrane. Mnh complex is a Na(+)Li(+)/H(+) antiporter involved in Na(+) and/or Li(+) excretion and Na(+) resistance. Na(+)/H(+) antiport consumes a transmembrane electrical potential, and is thus inferred to be electrogenic. Does not transport K(+), Ca(2+) or Mg(2+). Functionally, mrp complex is a Na(+)/H(+) antiporter involved in Na(+) excretion and Na(+) resistance. The chain is Na(+)/H(+) antiporter subunit E (mrpE) from Alkalihalophilus pseudofirmus (strain ATCC BAA-2126 / JCM 17055 / OF4) (Bacillus pseudofirmus).